The primary structure comprises 859 residues: Ribose import ATP-binding protein RbsA 1 (859 aa).

Positions 1-351 are disordered; sequence MRASLENGDD…AARAPDEASE (351 aa). A unknown region spans residues 1-353; that stretch reads MRASLENGDD…RAPDEASEEA (353 aa). A compositionally biased stretch (basic and acidic residues) spans 8–17; sequence GDDHDAHRLV. Residues 28–43 show a composition bias toward basic residues; sequence RAARRRAFARARRGER. Basic and acidic residues-rich tracts occupy residues 44-80, 89-129, and 137-167; these read RARG…DRRA, RREQ…EEGG, and RERE…EGDR. Basic residues predominate over residues 168–179; that stretch reads RRRRSRDPRRHP. 5 stretches are compositionally biased toward basic and acidic residues: residues 193-214, 239-250, 263-281, 288-301, and 308-323; these read GARE…GARE, RLDGRAVRDRGV, AGGD…RDVR, DSPR…EEVG, and DSGR…REDV. ABC transporter domains are found at residues 358–594 and 607–851; these read LALT…VGRR and RDAA…TSDV. Residue 390–397 participates in ATP binding; that stretch reads GENGAGKS.

Belongs to the ABC transporter superfamily. Ribose importer (TC 3.A.1.2.1) family. The complex is composed of an ATP-binding protein (RbsA), two transmembrane proteins (RbsC) and a solute-binding protein (RbsB).

It localises to the cell inner membrane. The catalysed reaction is D-ribose(out) + ATP + H2O = D-ribose(in) + ADP + phosphate + H(+). Part of the ABC transporter complex RbsABC involved in ribose import. Responsible for energy coupling to the transport system. The protein is Ribose import ATP-binding protein RbsA 1 of Burkholderia pseudomallei (strain 1710b).